The primary structure comprises 206 residues: MAANKGKSQGSLVLHKVIMVGSGGVGKSALTLQFMYDEFVEDYEPTKADSYRKKVVLDGEEVQIDILDTAGQEDYAAIRDNYFRSGEGFLLVFSITEHESFTATAEFREQILRVKSEEDKIPLLVVGNKSDLEERRQVPVDEARGKAEEWGVQYVETSAKTRANVDKVFFDLMREIRAKKMSENKDKNGRKSSKSKKSFKERCCLL.

GTP is bound at residue 21–29; that stretch reads GSGGVGKSA. The Effector region motif lies at 43 to 51; that stretch reads YEPTKADSY. GTP-binding positions include 68–72, 128–131, and 158–160; these read DTAGQ, NKSD, and SAK. The disordered stretch occupies residues 181 to 206; it reads MSENKDKNGRKSSKSKKSFKERCCLL. A Cysteine methyl ester modification is found at Cys-203. The S-geranylgeranyl cysteine moiety is linked to residue Cys-203. A propeptide spans 204–206 (removed in mature form); sequence CLL.

The protein belongs to the small GTPase superfamily. Ras family. As to quaternary structure, interacts with EXOC2/Sec5 and EXOC8/Exo84. Interacts (via effector domain) with RALBP1. Post-translationally, prenylation is essential for membrane localization. The farnesylated form confers resistance to the proapoptotic and anti-anchorage-dependent growth effects of some geranylgeranyltransferase I inhibitors.

It localises to the cell membrane. The protein resides in the midbody. The enzyme catalyses GTP + H2O = GDP + phosphate + H(+). Its activity is regulated as follows. Alternates between an inactive form bound to GDP and an active form bound to GTP. Activated by a guanine nucleotide-exchange factor (GEF) and inactivated by a GTPase-activating protein (GAP). Functionally, multifunctional GTPase involved in a variety of cellular processes including gene expression, cell migration, cell proliferation, oncogenic transformation and membrane trafficking. Accomplishes its multiple functions by interacting with distinct downstream effectors. Acts as a GTP sensor for GTP-dependent exocytosis of dense core vesicles. Required both to stabilize the assembly of the exocyst complex and to localize functional exocyst complexes to the leading edge of migrating cells. Required for suppression of apoptosis. In late stages of cytokinesis, upon completion of the bridge formation between dividing cells, mediates exocyst recruitment to the midbody to drive abscission. Involved in ligand-dependent receptor mediated endocytosis of the EGF and insulin receptors. The protein is Ras-related protein Ral-B (Ralb) of Mus musculus (Mouse).